The chain runs to 352 residues: Anthranilate phosphoribosyltransferase (352 aa).

Residues Gly91, 94–95, Thr99, 101–104, 119–127, and Ser131 contribute to the 5-phospho-alpha-D-ribose 1-diphosphate site; these read GD, NIST, and KHGNRASSS. Gly91 lines the anthranilate pocket. Ser103 provides a ligand contact to Mg(2+). Asn122 serves as a coordination point for anthranilate. Anthranilate is bound at residue Arg177. Residues Asp235 and Glu236 each coordinate Mg(2+).

The protein belongs to the anthranilate phosphoribosyltransferase family. In terms of assembly, homodimer. Requires Mg(2+) as cofactor.

The catalysed reaction is N-(5-phospho-beta-D-ribosyl)anthranilate + diphosphate = 5-phospho-alpha-D-ribose 1-diphosphate + anthranilate. Its pathway is amino-acid biosynthesis; L-tryptophan biosynthesis; L-tryptophan from chorismate: step 2/5. Functionally, catalyzes the transfer of the phosphoribosyl group of 5-phosphorylribose-1-pyrophosphate (PRPP) to anthranilate to yield N-(5'-phosphoribosyl)-anthranilate (PRA). This Arthrobacter sp. (strain FB24) protein is Anthranilate phosphoribosyltransferase.